Here is a 120-residue protein sequence, read N- to C-terminus: UPF0102 protein Pfl01_4685 (120 aa).

Belongs to the UPF0102 family.

This Pseudomonas fluorescens (strain Pf0-1) protein is UPF0102 protein Pfl01_4685.